Reading from the N-terminus, the 96-residue chain is Small ribosomal subunit protein bS6 (96 aa).

Belongs to the bacterial ribosomal protein bS6 family.

Functionally, binds together with bS18 to 16S ribosomal RNA. The polypeptide is Small ribosomal subunit protein bS6 (Synechococcus sp. (strain JA-2-3B'a(2-13)) (Cyanobacteria bacterium Yellowstone B-Prime)).